We begin with the raw amino-acid sequence, 198 residues long: Large ribosomal subunit protein eL18 (198 aa).

A disordered region spans residues 157 to 198 (RHFGASGVPGSHSKPYATNRGKETKRGRRTGRSYKRKAFRHV). Residues 179–198 (ETKRGRRTGRSYKRKAFRHV) show a composition bias toward basic residues.

This sequence belongs to the eukaryotic ribosomal protein eL18 family.

It localises to the cytoplasm. This chain is Large ribosomal subunit protein eL18 (RPL18-A), found in Leishmania major.